The primary structure comprises 76 residues: Small ribosomal subunit protein bS21A (76 aa).

The span at 35–52 (HYEKPSEKRAREKAEAVR) shows a compositional bias: basic and acidic residues. A disordered region spans residues 35–76 (HYEKPSEKRAREKAEAVRRARKLARKRAQREGLVSGRPAAAR). The span at 53-62 (RARKLARKRA) shows a compositional bias: basic residues.

This sequence belongs to the bacterial ribosomal protein bS21 family.

The chain is Small ribosomal subunit protein bS21A from Chelativorans sp. (strain BNC1).